Reading from the N-terminus, the 1836-residue chain is U3 small nucleolar RNA-associated protein 10 (1836 aa).

An HEAT 1 repeat occupies 245–283 (EVVGFLLLPSKYETLRNIDVDTRLTAYSIIAVLASIIPI). The interval 453-473 (SNSSVRDSDDVEFDAGEEDNN) is disordered. A compositionally biased stretch (acidic residues) spans 461–473 (DDVEFDAGEEDNN). HEAT repeat units follow at residues 585-623 (PLDL…TTTS) and 813-850 (VENR…DQDL). A disordered region spans residues 863–883 (QIPEQGPAKRRRRSSSSTKQA). 2 helical membrane-spanning segments follow: residues 998–1018 (LLLV…HSVM) and 1085–1105 (LFTY…LLFL). HEAT repeat units follow at residues 1333–1372 (ESVL…KFGA), 1749–1787 (ETLV…KMGE), and 1790–1828 (LTYL…NVLG).

The protein belongs to the HEATR1/UTP10 family. In terms of assembly, component of the ribosomal small subunit (SSU) processome.

Its subcellular location is the nucleus. It localises to the nucleolus. The protein localises to the membrane. In terms of biological role, involved in nucleolar processing of pre-18S ribosomal RNA. Involved in ribosome biosynthesis. The sequence is that of U3 small nucleolar RNA-associated protein 10 from Scheffersomyces stipitis (strain ATCC 58785 / CBS 6054 / NBRC 10063 / NRRL Y-11545) (Yeast).